The sequence spans 221 residues: Small ribosomal subunit protein uS2c (221 aa).

This sequence belongs to the universal ribosomal protein uS2 family.

The protein localises to the plastid. It is found in the chloroplast. The protein is Small ribosomal subunit protein uS2c (rps2) of Cyanidioschyzon merolae (strain NIES-3377 / 10D) (Unicellular red alga).